Reading from the N-terminus, the 167-residue chain is Protein FimG (167 aa).

Positions 1 to 23 (MKWCKRGYVLAAILALASATIQA) are cleaved as a signal peptide. Cysteines 39 and 77 form a disulfide.

It belongs to the fimbrial protein family.

It localises to the fimbrium. Functionally, involved in regulation of length and mediation of adhesion of type 1 fimbriae (but not necessary for the production of fimbriae). Involved in the integration of FimH in the fimbriae. The sequence is that of Protein FimG (fimG) from Escherichia coli (strain K12).